The chain runs to 125 residues: Large ribosomal subunit protein bL17 (125 aa).

This sequence belongs to the bacterial ribosomal protein bL17 family. In terms of assembly, part of the 50S ribosomal subunit. Contacts protein L32.

The sequence is that of Large ribosomal subunit protein bL17 from Acinetobacter baylyi (strain ATCC 33305 / BD413 / ADP1).